Consider the following 349-residue polypeptide: MDKLKIVLGIETSCDETAVAIVNSNKEVLSHKILSQQEHAAYGGVVPEIASRAHINYLYELVGSCIEESQLCFNDIDAIAVTAGPGLIGGLIVGIMMAKAISSVTGKPIIEINHLEAHALIIRMFYEIDFPFLLLIMSGGHCQFLVAYDVRCYYKLGSSLDDSLGEVFDKVARMLNLGYPGGPIIEEKSLLGDSGSFTLPRALTNRPGCDFSFSGLKTAVRNIIAGQKCINHELVCNISASFQDCVGDILVNRINNAIVMSKDIDHRINKLVVTGGVAANKLLRNRMSVCANDNGFEILYPPSKLCTDNGVMIGWAGIENLAKGYVSNLNFFPRARWPLENLRFDILRK.

Fe cation is bound by residues His-114 and His-118. Substrate is bound by residues 136–140 (IMSGG), Asp-169, Gly-182, and Asn-280. Asp-308 contributes to the Fe cation binding site.

The protein belongs to the KAE1 / TsaD family. Requires Fe(2+) as cofactor.

The protein resides in the cytoplasm. It carries out the reaction L-threonylcarbamoyladenylate + adenosine(37) in tRNA = N(6)-L-threonylcarbamoyladenosine(37) in tRNA + AMP + H(+). In terms of biological role, required for the formation of a threonylcarbamoyl group on adenosine at position 37 (t(6)A37) in tRNAs that read codons beginning with adenine. Is involved in the transfer of the threonylcarbamoyl moiety of threonylcarbamoyl-AMP (TC-AMP) to the N6 group of A37, together with TsaE and TsaB. TsaD likely plays a direct catalytic role in this reaction. The polypeptide is tRNA N6-adenosine threonylcarbamoyltransferase (Ehrlichia chaffeensis (strain ATCC CRL-10679 / Arkansas)).